A 646-amino-acid chain; its full sequence is Threonine--tRNA ligase (646 aa).

The TGS domain maps to 1–63 (MAQISLTFPD…ETDAKIAIHT (63 aa)). The interval 247–544 (DHRKLGREME…LIENYAGKLP (298 aa)) is catalytic. Zn(2+)-binding residues include C344, H395, and H521.

Belongs to the class-II aminoacyl-tRNA synthetase family. Homodimer. The cofactor is Zn(2+).

The protein resides in the cytoplasm. It catalyses the reaction tRNA(Thr) + L-threonine + ATP = L-threonyl-tRNA(Thr) + AMP + diphosphate + H(+). Its function is as follows. Catalyzes the attachment of threonine to tRNA(Thr) in a two-step reaction: L-threonine is first activated by ATP to form Thr-AMP and then transferred to the acceptor end of tRNA(Thr). Also edits incorrectly charged L-seryl-tRNA(Thr). This Cereibacter sphaeroides (strain ATCC 17029 / ATH 2.4.9) (Rhodobacter sphaeroides) protein is Threonine--tRNA ligase.